The chain runs to 414 residues: Ribulose bisphosphate carboxylase/oxygenase activase (414 aa).

37–44 (GRKGEGKT) contributes to the ATP binding site. Residues 296-326 (RGYQTAPPPEAPVIQPVNNSSHKQKTSNTHL) are disordered. Over residues 311-326 (PVNNSSHKQKTSNTHL) the composition is skewed to polar residues.

This sequence belongs to the RuBisCO activase family.

Functionally, activation of RuBisCO (ribulose-1,5-bisohosphate carboxylase/oxygenase; EC 4.1.1.39) involves the ATP-dependent carboxylation of the epsilon-amino group of lysine leading to a carbamate structure. This is Ribulose bisphosphate carboxylase/oxygenase activase (rca) from Nostoc sp. (strain PCC 7120 / SAG 25.82 / UTEX 2576).